The chain runs to 330 residues: Uracil-DNA glycosylase, mitochondrial (330 aa).

The transit peptide at 1–49 (MASSTPKTLMDFFQPAKRLKASPSSSSFPAVSVAGGSRDLGSVANSPPR) directs the protein to the mitochondrion. Asp173 functions as the Proton acceptor in the catalytic mechanism.

This sequence belongs to the uracil-DNA glycosylase (UDG) superfamily. UNG family.

The protein resides in the mitochondrion. The enzyme catalyses Hydrolyzes single-stranded DNA or mismatched double-stranded DNA and polynucleotides, releasing free uracil.. Its activity is regulated as follows. Inhidited by the small peptide uracil-DNA-glycosylase inhibitor (Ugi). Its function is as follows. Excises uracil residues from the DNA which can arise as a result of misincorporation of dUMP residues by DNA polymerase or due to deamination of cytosine. More active on U:G, U:T and U:C mispairs than on U:A pairs. Highly specific for uracil and no activity with 5-substituted uracil or cytosine derivatives. Required for initiation of base excision repair (BER) of uracil. The polypeptide is Uracil-DNA glycosylase, mitochondrial (Arabidopsis thaliana (Mouse-ear cress)).